The primary structure comprises 920 residues: Protein translocase subunit SecA (920 aa).

ATP contacts are provided by residues glutamine 85, 103 to 107, and aspartate 514; that span reads GEGKT. Zn(2+) is bound by residues cysteine 904, cysteine 906, cysteine 915, and histidine 916.

It belongs to the SecA family. Monomer and homodimer. Part of the essential Sec protein translocation apparatus which comprises SecA, SecYEG and auxiliary proteins SecDF-YajC and YidC. The cofactor is Zn(2+).

The protein localises to the cell inner membrane. It is found in the cytoplasm. It carries out the reaction ATP + H2O + cellular proteinSide 1 = ADP + phosphate + cellular proteinSide 2.. In terms of biological role, part of the Sec protein translocase complex. Interacts with the SecYEG preprotein conducting channel. Has a central role in coupling the hydrolysis of ATP to the transfer of proteins into and across the cell membrane, serving both as a receptor for the preprotein-SecB complex and as an ATP-driven molecular motor driving the stepwise translocation of polypeptide chains across the membrane. The protein is Protein translocase subunit SecA of Janthinobacterium sp. (strain Marseille) (Minibacterium massiliensis).